A 540-amino-acid chain; its full sequence is MVFTKEEVDYSLYLVTDSTMLPPGTTLCSQVEAGLKNGVTLVQIREKDIETKNFVAEALEVQKICKKYNVPLIINDRIDVAMAIDADGVHVGQDDMPIPMVRKLLGPSKILGWSVGKPSEVETLAKWGPDMVDYIGVGTLFPTSTKKNPKKSPMGPQGAIAILDALEEFKATWCRTVGIGGLHPDNIQRVLCQCVASNGKRSLDGISLVSDIMAAPDACAATKRLRGLLDATRYQFVECELNNTFPTTTSIQNVISQVSNNRPLVQHITNKVHQNFGANVTLALGSSPIMSEIESEVSELARIPNASLLLNTGSVAPIEMLKAAINAYNEVNRPITFDPVGYSATETRLCLNNTLLTYGQFACIKGNCSEILSLAKLNNHKMKGVDSSSGKTNIDTLVRATQIVAFQYRTVAVCTGEFDCVADGTFGGEYKLSSGTEGITAEDLPCVIIEDGPIPIMGDITASGCSLGSTIASFIGGLDSTGKLFDAVVGAVLLYKSAGKLASTRCQGSGSFHVELIDALYQLFHENKPEKWSASLKKFK.

Positions Met1–Glu238 are thiamine-phosphate synthase. Residues Gln43–Lys47 and Asn75 each bind 4-amino-2-methyl-5-(diphosphooxymethyl)pyrimidine. Asp76 and Asp95 together coordinate Mg(2+). Ser114 is a 4-amino-2-methyl-5-(diphosphooxymethyl)pyrimidine binding site. Thr143–Thr145 contributes to the 2-[(2R,5Z)-2-carboxy-4-methylthiazol-5(2H)-ylidene]ethyl phosphate binding site. Residue Lys146 coordinates 4-amino-2-methyl-5-(diphosphooxymethyl)pyrimidine. 2-[(2R,5Z)-2-carboxy-4-methylthiazol-5(2H)-ylidene]ethyl phosphate-binding positions include Gly181 and Val209–Ser210. The interval Cys239 to Lys540 is hydroxyethylthiazole kinase. Met290 provides a ligand contact to 5-(2-hydroxyethyl)-4-methylthiazole. Residues Lys365 and Thr415 each contribute to the ATP site. Position 462 (Ala462) interacts with 5-(2-hydroxyethyl)-4-methylthiazole. Residue Cys465 is the Proton acceptor; for hydroxyethylthiazole kinase activity of the active site.

This sequence in the N-terminal section; belongs to the thiamine-phosphate synthase family. It in the C-terminal section; belongs to the Thz kinase family. In terms of assembly, homooctamer. Mg(2+) is required as a cofactor.

The enzyme catalyses 2-[(2R,5Z)-2-carboxy-4-methylthiazol-5(2H)-ylidene]ethyl phosphate + 4-amino-2-methyl-5-(diphosphooxymethyl)pyrimidine + 2 H(+) = thiamine phosphate + CO2 + diphosphate. It carries out the reaction 2-(2-carboxy-4-methylthiazol-5-yl)ethyl phosphate + 4-amino-2-methyl-5-(diphosphooxymethyl)pyrimidine + 2 H(+) = thiamine phosphate + CO2 + diphosphate. The catalysed reaction is 4-methyl-5-(2-phosphooxyethyl)-thiazole + 4-amino-2-methyl-5-(diphosphooxymethyl)pyrimidine + H(+) = thiamine phosphate + diphosphate. It catalyses the reaction 5-(2-hydroxyethyl)-4-methylthiazole + ATP = 4-methyl-5-(2-phosphooxyethyl)-thiazole + ADP + H(+). The protein operates within cofactor biosynthesis; thiamine diphosphate biosynthesis; 4-methyl-5-(2-phosphoethyl)-thiazole from 5-(2-hydroxyethyl)-4-methylthiazole: step 1/1. Its pathway is cofactor biosynthesis; thiamine diphosphate biosynthesis; thiamine phosphate from 4-amino-2-methyl-5-diphosphomethylpyrimidine and 4-methyl-5-(2-phosphoethyl)-thiazole: step 1/1. Its function is as follows. Essential for thiamine biosynthesis. The kinase activity is involved in the salvage synthesis of TH-P from the thiazole. In terms of biological role, condenses 4-methyl-5-(beta-hydroxyethyl)thiazole monophosphate (THZ-P) and 2-methyl-4-amino-5-hydroxymethyl pyrimidine pyrophosphate (HMP-PP) to form thiamine monophosphate (TMP). The polypeptide is Thiamine biosynthetic bifunctional enzyme (THI6) (Saccharomyces cerevisiae (strain ATCC 204508 / S288c) (Baker's yeast)).